We begin with the raw amino-acid sequence, 258 residues long: Acyl-[acyl-carrier-protein]--UDP-N-acetylglucosamine O-acyltransferase (258 aa).

This sequence belongs to the transferase hexapeptide repeat family. LpxA subfamily. Homotrimer.

The protein resides in the cytoplasm. The enzyme catalyses a (3R)-hydroxyacyl-[ACP] + UDP-N-acetyl-alpha-D-glucosamine = a UDP-3-O-[(3R)-3-hydroxyacyl]-N-acetyl-alpha-D-glucosamine + holo-[ACP]. It functions in the pathway glycolipid biosynthesis; lipid IV(A) biosynthesis; lipid IV(A) from (3R)-3-hydroxytetradecanoyl-[acyl-carrier-protein] and UDP-N-acetyl-alpha-D-glucosamine: step 1/6. Involved in the biosynthesis of lipid A, a phosphorylated glycolipid that anchors the lipopolysaccharide to the outer membrane of the cell. The polypeptide is Acyl-[acyl-carrier-protein]--UDP-N-acetylglucosamine O-acyltransferase (Ectopseudomonas mendocina (strain ymp) (Pseudomonas mendocina)).